Reading from the N-terminus, the 292-residue chain is Quinolinate synthase (292 aa).

Positions 8 and 25 each coordinate iminosuccinate. A [4Fe-4S] cluster-binding site is contributed by Cys70. Iminosuccinate-binding positions include 96–98 and Ser113; that span reads YVN. [4Fe-4S] cluster is bound at residue Cys158. Residues 184-186 and Thr201 contribute to the iminosuccinate site; that span reads HPE. Position 244 (Cys244) interacts with [4Fe-4S] cluster.

It belongs to the quinolinate synthase family. Type 2 subfamily. [4Fe-4S] cluster is required as a cofactor.

The protein resides in the cytoplasm. The catalysed reaction is iminosuccinate + dihydroxyacetone phosphate = quinolinate + phosphate + 2 H2O + H(+). It functions in the pathway cofactor biosynthesis; NAD(+) biosynthesis; quinolinate from iminoaspartate: step 1/1. Functionally, catalyzes the condensation of iminoaspartate with dihydroxyacetone phosphate to form quinolinate. This is Quinolinate synthase (nadA) from Methanopyrus kandleri (strain AV19 / DSM 6324 / JCM 9639 / NBRC 100938).